The following is a 1009-amino-acid chain: Protein-tyrosine kinase 2-beta (1009 aa).

The FERM domain occupies 39–359; sequence RILKVCFYSN…GYCRLQGEHQ (321 aa). S361, S375, and S399 each carry phosphoserine. Y402 is modified (phosphotyrosine; by autocatalysis). The 259-residue stretch at 425–683 folds into the Protein kinase domain; it reads VVLNRILGEG…ELVCSLSDVY (259 aa). Residues 431–439, K457, and 503–509 each bind ATP; these read LGEGFFGEV and ELYPYGE. The active-site Proton acceptor is the D549. The residue at position 579 (Y579) is a Phosphotyrosine. Phosphotyrosine; by SRC, FYN and LCK is present on Y580. The disordered stretch occupies residues 701 to 725; it reads TPKILEPTAFQEPPPKPSRPKYRPP. The segment covering 712-725 has biased composition (pro residues); that stretch reads EPPPKPSRPKYRPP. Position 722 is a phosphotyrosine (Y722). S762 carries the phosphoserine modification. A Phosphothreonine modification is found at T765. Positions 801-1009 are interaction with TGFB1I1; it reads KVKMRQILDK…LANLAHPPAE (209 aa). Residues Y819 and Y834 each carry the phosphotyrosine modification. S839 carries the phosphoserine modification. The residue at position 842 (T842) is a Phosphothreonine. Phosphotyrosine is present on Y849. At S866 the chain carries Phosphoserine. Positions 868 to 1009 are focal adhesion targeting (FAT); that stretch reads QPTANLDRTD…LANLAHPPAE (142 aa). Residue Y881 is modified to Phosphotyrosine; by SRC.

This sequence belongs to the protein kinase superfamily. Tyr protein kinase family. FAK subfamily. As to quaternary structure, homodimer, or homooligomer. Interacts with SIRPA and SH2D3C. Interacts with ARHGAP10. Interacts with DLG4. Interacts with KCNA2. Interacts with NPHP1, ASAP1, ASAP2, ARHGAP26, SKAP2 and TGFB1I1. The Tyr-402 phosphorylated form interacts with SRC (via SH2 domain) and SRC family members. Forms a signaling complex with EPHA1, LCK and phosphatidylinositol 3-kinase; upon activation by EFNA1. Interacts with GRB2 (via SH2 domain). Interacts with P53/TP53 and MDM2. Interacts with MYLK. Interacts with BCAR1. Interacts with PDPK1. Interacts (hypophosphorylated) with PXN. Interacts with RB1CC1. Interacts with RHOU. Interacts with VAV1. Interacts with LPXN and PTPN12. Post-translationally, phosphorylated on tyrosine residues in response to various stimuli that elevate the intracellular calcium concentration; this activation is indirect and may be mediated by production of reactive oxygen species (ROS). Tyr-402 is the major autophosphorylation site, but other kinases can also phosphorylate Tyr-402. Autophosphorylation occurs in trans, i.e. one subunit of the dimeric receptor phosphorylates tyrosine residues on the other subunit. Phosphorylation at Tyr-402 promotes interaction with SRC and SRC family members, leading to phosphorylation at Tyr-579; Tyr-580 and Tyr-881. Phosphorylation at Tyr-881 is important for interaction with GRB2. Phosphorylated on tyrosine residues upon activation of FGR and PKC. Recruitment by NPHP1 to cell matrix adhesions initiates Tyr-402 phosphorylation. In monocytes, adherence to substrata is required for tyrosine phosphorylation and kinase activation. Angiotensin II, thapsigargin and L-alpha-lysophosphatidic acid (LPA) also induce autophosphorylation and increase kinase activity. Phosphorylation by MYLK promotes ITGB2 activation and is thus essential to trigger neutrophil transmigration during lung injury. Dephosphorylated by PTPN12. In terms of tissue distribution, most abundant in the brain, with highest levels in amygdala and hippocampus. Low levels in kidney (at protein level). Also expressed in spleen and lymphocytes.

Its subcellular location is the cytoplasm. The protein resides in the perinuclear region. It localises to the cell membrane. The protein localises to the cell junction. It is found in the focal adhesion. Its subcellular location is the cell projection. The protein resides in the lamellipodium. It localises to the cell cortex. The protein localises to the nucleus. The enzyme catalyses L-tyrosyl-[protein] + ATP = O-phospho-L-tyrosyl-[protein] + ADP + H(+). Its activity is regulated as follows. Activated in response to stimuli that lead to increased intracellular Ca(2+) levels; this activation is indirect and may be mediated by calcium-mediated production of reactive oxygen species (ROS). Activated by autophosphorylation at Tyr-402; this creates a binding site for SRC family kinases and leads to phosphorylation at additional tyrosine residues. Phosphorylation at Tyr-402, Tyr-579 and Tyr-580 is required for optimal kinase activity. Inhibited by PF-562,271, BIRB796, PF-4618433 and by PF-431396, PF-2318841 and their derivatives. Inhibited by sulfoximine-substituted trifluoromethylpyrimidines. Inhibited by 4-amino and 5-aryl substituted pyridinone compounds. In terms of biological role, non-receptor protein-tyrosine kinase that regulates reorganization of the actin cytoskeleton, cell polarization, cell migration, adhesion, spreading and bone remodeling. Plays a role in the regulation of the humoral immune response, and is required for normal levels of marginal B-cells in the spleen and normal migration of splenic B-cells. Required for normal macrophage polarization and migration towards sites of inflammation. Regulates cytoskeleton rearrangement and cell spreading in T-cells, and contributes to the regulation of T-cell responses. Promotes osteoclastic bone resorption; this requires both PTK2B/PYK2 and SRC. May inhibit differentiation and activity of osteoprogenitor cells. Functions in signaling downstream of integrin and collagen receptors, immune receptors, G-protein coupled receptors (GPCR), cytokine, chemokine and growth factor receptors, and mediates responses to cellular stress. Forms multisubunit signaling complexes with SRC and SRC family members upon activation; this leads to the phosphorylation of additional tyrosine residues, creating binding sites for scaffold proteins, effectors and substrates. Regulates numerous signaling pathways. Promotes activation of phosphatidylinositol 3-kinase and of the AKT1 signaling cascade. Promotes activation of NOS3. Regulates production of the cellular messenger cGMP. Promotes activation of the MAP kinase signaling cascade, including activation of MAPK1/ERK2, MAPK3/ERK1 and MAPK8/JNK1. Promotes activation of Rho family GTPases, such as RHOA and RAC1. Recruits the ubiquitin ligase MDM2 to P53/TP53 in the nucleus, and thereby regulates P53/TP53 activity, P53/TP53 ubiquitination and proteasomal degradation. Acts as a scaffold, binding to both PDPK1 and SRC, thereby allowing SRC to phosphorylate PDPK1 at 'Tyr-9, 'Tyr-373', and 'Tyr-376'. Promotes phosphorylation of NMDA receptors by SRC family members, and thereby contributes to the regulation of NMDA receptor ion channel activity and intracellular Ca(2+) levels. May also regulate potassium ion transport by phosphorylation of potassium channel subunits. Phosphorylates SRC; this increases SRC kinase activity. Phosphorylates ASAP1, NPHP1, KCNA2 and SHC1. Promotes phosphorylation of ASAP2, RHOU and PXN; this requires both SRC and PTK2/PYK2. The sequence is that of Protein-tyrosine kinase 2-beta (PTK2B) from Homo sapiens (Human).